The following is a 342-amino-acid chain: Ferredoxin--NADP reductase (342 aa).

FAD-binding residues include Cys-17, Asp-36, Gln-44, Tyr-49, Val-89, Phe-124, Asp-289, and Thr-330.

Belongs to the ferredoxin--NADP reductase type 2 family. Homodimer. The cofactor is FAD.

It carries out the reaction 2 reduced [2Fe-2S]-[ferredoxin] + NADP(+) + H(+) = 2 oxidized [2Fe-2S]-[ferredoxin] + NADPH. The chain is Ferredoxin--NADP reductase from Bradyrhizobium diazoefficiens (strain JCM 10833 / BCRC 13528 / IAM 13628 / NBRC 14792 / USDA 110).